A 784-amino-acid chain; its full sequence is Melanoma-associated antigen D1 (784 aa).

The segment at proline 41–valine 67 is disordered. A compositionally biased stretch (low complexity) spans alanine 47–asparagine 65. The residue at position 97 (tyrosine 97) is a Phosphotyrosine. Composition is skewed to polar residues over residues proline 195–alanine 214, alanine 232–serine 246, asparagine 259–glycine 269, and leucine 306–arginine 320. The segment at proline 195–glutamine 339 is disordered. 19 repeat units span residues tryptophan 302–alanine 307, tryptophan 308–glycine 313, tryptophan 314–alanine 319, tryptophan 338–alanine 343, tryptophan 344–isoleucine 349, tryptophan 350–isoleucine 355, tryptophan 356–isoleucine 361, tryptophan 362–valine 367, tryptophan 368–valine 373, tryptophan 374–alanine 379, tryptophan 380–glycine 385, tryptophan 386–glycine 391, tryptophan 392–glycine 397, tryptophan 398–aspartate 403, tryptophan 404–aspartate 409, tryptophan 410–aspartate 415, tryptophan 416–aspartate 421, tryptophan 422–aspartate 427, and tryptophan 428–aspartate 433. The 22 X 6 AA tandem repeats of W-[PQ]-X-P-X-X stretch occupies residues tryptophan 302–proline 450. A disordered region spans residues alanine 379–leucine 418. A compositionally biased stretch (low complexity) spans proline 383–aspartate 403. The span at tryptophan 404 to leucine 418 shows a compositional bias: pro residues. Residues tryptophan 434 to aspartate 438 form a 20; approximate repeat. 2 repeat units span residues tryptophan 439–aspartate 444 and tryptophan 445–proline 450. The disordered stretch occupies residues valine 441 to proline 471. Low complexity predominate over residues asparagine 447 to arginine 461. An MAGE domain is found at leucine 477–alanine 675.

Interacts with DLX5, DLX7 and MSX2 and forms homomultimers. Interacts with UNC5A. Interacts with TRIM28 and PJA1. Interacts with NGFR/p75NTR and RORA.

The protein localises to the cytoplasm. Its subcellular location is the cell membrane. The protein resides in the nucleus. In terms of biological role, involved in the apoptotic response after nerve growth factor (NGF) binding in neuronal cells. Inhibits cell cycle progression, and facilitates NGFR-mediated apoptosis. May act as a regulator of the function of DLX family members. May enhance ubiquitin ligase activity of RING-type zinc finger-containing E3 ubiquitin-protein ligases. Proposed to act through recruitment and/or stabilization of the Ubl-conjugating enzyme (E2) at the E3:substrate complex. Plays a role in the circadian rhythm regulation. May act as RORA co-regulator, modulating the expression of core clock genes such as BMAL1 and NFIL3, induced, or NR1D1, repressed. In Sus scrofa (Pig), this protein is Melanoma-associated antigen D1 (MAGED1).